The primary structure comprises 160 residues: Major strawberry allergen Fra a 1-D (160 aa).

This sequence belongs to the BetVI family. In terms of assembly, monomer.

This is Major strawberry allergen Fra a 1-D from Fragaria ananassa (Strawberry).